The sequence spans 273 residues: Dermonecrotic toxin LapSicTox-alphaIB1aiii (273 aa).

His-5 is a catalytic residue. Positions 25 and 27 each coordinate Mg(2+). The Nucleophile role is filled by His-41. 2 cysteine pairs are disulfide-bonded: Cys-45/Cys-51 and Cys-47/Cys-190. Asp-85 is a Mg(2+) binding site. A glycan (N-linked (GlcNAc...) asparagine) is linked at Asn-250.

This sequence belongs to the arthropod phospholipase D family. Class II subfamily. Mg(2+) serves as cofactor. In terms of tissue distribution, expressed by the venom gland.

The protein resides in the secreted. It catalyses the reaction an N-(acyl)-sphingosylphosphocholine = an N-(acyl)-sphingosyl-1,3-cyclic phosphate + choline. It carries out the reaction an N-(acyl)-sphingosylphosphoethanolamine = an N-(acyl)-sphingosyl-1,3-cyclic phosphate + ethanolamine. The catalysed reaction is a 1-acyl-sn-glycero-3-phosphocholine = a 1-acyl-sn-glycero-2,3-cyclic phosphate + choline. The enzyme catalyses a 1-acyl-sn-glycero-3-phosphoethanolamine = a 1-acyl-sn-glycero-2,3-cyclic phosphate + ethanolamine. Its function is as follows. Dermonecrotic toxins cleave the phosphodiester linkage between the phosphate and headgroup of certain phospholipids (sphingolipid and lysolipid substrates), forming an alcohol (often choline) and a cyclic phosphate. This toxin acts on sphingomyelin (SM). It may also act on ceramide phosphoethanolamine (CPE), lysophosphatidylcholine (LPC) and lysophosphatidylethanolamine (LPE), but not on lysophosphatidylserine (LPS), and lysophosphatidylglycerol (LPG). It acts by transphosphatidylation, releasing exclusively cyclic phosphate products as second products. Induces dermonecrosis, hemolysis, increased vascular permeability, edema, inflammatory response, and platelet aggregation. The sequence is that of Dermonecrotic toxin LapSicTox-alphaIB1aiii from Loxosceles apachea (Apache recluse spider).